Consider the following 617-residue polypeptide: Chaperone protein HscA homolog (617 aa).

The protein belongs to the heat shock protein 70 family.

Its function is as follows. Chaperone involved in the maturation of iron-sulfur cluster-containing proteins. Has a low intrinsic ATPase activity which is markedly stimulated by HscB. The polypeptide is Chaperone protein HscA homolog (Actinobacillus pleuropneumoniae serotype 5b (strain L20)).